We begin with the raw amino-acid sequence, 99 residues long: SAGA-associated factor 11 (99 aa).

The SGF11-type zinc-finger motif lies at 71–92; the sequence is FYCENCGREVSGNRFAAHLQRC.

It belongs to the SGF11 family. In terms of assembly, component of the 1.8 MDa SAGA transcription coactivator-HAT complex. SAGA is built of 5 distinct domains with specialized functions. Within the SAGA complex, SUS1, SGF11, SGF73 and UBP8 form an additional subcomplex of SAGA called the DUB module (deubiquitination module). Interacts directly with SGF73, SUS1 and UBP8.

It localises to the nucleus. In terms of biological role, functions as a component of the transcription regulatory histone acetylation (HAT) complex SAGA. At the promoters, SAGA is required for recruitment of the basal transcription machinery. It influences RNA polymerase II transcriptional activity through different activities such as TBP interaction and promoter selectivity, interaction with transcription activators, and chromatin modification through histone acetylation and deubiquitination. SAGA acetylates nucleosomal histone H3 to some extent (to form H3K9ac, H3K14ac, H3K18ac and H3K23ac). SAGA interacts with DNA via upstream activating sequences (UASs). Involved in transcriptional regulation of a subset of SAGA-regulated genes. Within the SAGA complex, participates in a subcomplex, that specifically deubiquitinates histones H2B. In Candida glabrata (strain ATCC 2001 / BCRC 20586 / JCM 3761 / NBRC 0622 / NRRL Y-65 / CBS 138) (Yeast), this protein is SAGA-associated factor 11.